The following is a 239-amino-acid chain: THAP domain-containing protein 3 (239 aa).

Residues 1–82 (MPKSCAARQC…LKHNAVPTVF (82 aa)) form a THAP-type zinc finger. Disordered stretches follow at residues 88-125 (PQLVRENTDPTGRSGDATSGERKVLPETGSGECGLGRK) and 139-174 (VGGLGAQVPPHTPETSGVPGQPASPPELKRRLPTQP). An HCFC1-binding motif (HBM) motif is present at residues 176-179 (DHSY).

Component of a THAP1/THAP3-HCFC1-OGT complex that contains at least, either THAP1 or THAP3, HCFC1 and OGT. Interacts directly with OGT and HCFC1 (via its HBM).

Component of a THAP1/THAP3-HCFC1-OGT complex that is required for the regulation of the transcriptional activity of RRM1. This is THAP domain-containing protein 3 (THAP3) from Bos taurus (Bovine).